Here is a 190-residue protein sequence, read N- to C-terminus: Potassium-transporting ATPase KdpC subunit (190 aa).

A helical transmembrane segment spans residues 10-30 (VLFAVLTLICGVIYPYAITGI).

It belongs to the KdpC family. In terms of assembly, the system is composed of three essential subunits: KdpA, KdpB and KdpC.

Its subcellular location is the cell inner membrane. In terms of biological role, part of the high-affinity ATP-driven potassium transport (or Kdp) system, which catalyzes the hydrolysis of ATP coupled with the electrogenic transport of potassium into the cytoplasm. This subunit acts as a catalytic chaperone that increases the ATP-binding affinity of the ATP-hydrolyzing subunit KdpB by the formation of a transient KdpB/KdpC/ATP ternary complex. This Herminiimonas arsenicoxydans protein is Potassium-transporting ATPase KdpC subunit.